A 256-amino-acid polypeptide reads, in one-letter code: Protein Ta0487 (256 aa).

Belongs to the CinA family.

The chain is Protein Ta0487 from Thermoplasma acidophilum (strain ATCC 25905 / DSM 1728 / JCM 9062 / NBRC 15155 / AMRC-C165).